The following is a 327-amino-acid chain: MHPQQLVVSWFSLVLLASPIVAIWELEKNVYVVELDWYPNAPGETVVLTCDTPEEDGITWTSDQSSEVLGSGKTLTIQVKEFGDAGQYTCHKGGEVLSRSLLLLHKKEDGIWSTDILKDQKEPKAKSFLKCEAKDYSGHFTCSWLTAISTNLKFSVKSSRGSSDPRGVTCGAASLSAEKVSMDHREYNKYTVECQEGSACPAAEESLPIEVVMEAVHKLKYENYTSSFFIRDIIKPDPPKNLQLRPLKNSRQVEVSWEYPDTWSTPHSYFSLTFCVQVQGKNKREKKLFTDQTSAKVTCHKDANIRVQARDRYYSSFWSEWASVSCS.

A signal peptide spans methionine 1–alanine 22. Positions isoleucine 23–lysine 106 constitute an Ig-like C2-type domain. Residues cysteine 50 and cysteine 90 are joined by a disulfide bond. Asparagine 223 carries N-linked (GlcNAc...) asparagine glycosylation. The Fibronectin type-III domain occupies proline 238–serine 327.

It belongs to the IL-12B family. As to quaternary structure, heterodimer with IL12A; disulfide-linked. The heterodimer is known as interleukin IL-12. Heterodimer with IL23A; disulfide-linked. The heterodimer is known as interleukin IL-23. Also secreted as a monomer. Interacts with NBR1; this interaction promotes IL-12 secretion.

It is found in the secreted. Functionally, cytokine that can act as a growth factor for activated T and NK cells, enhance the lytic activity of NK/lymphokine-activated killer cells, and stimulate the production of IFN-gamma by resting PBMC. In terms of biological role, associates with IL23A to form the IL-23 interleukin, a heterodimeric cytokine which functions in innate and adaptive immunity. IL-23 may constitute with IL-17 an acute response to infection in peripheral tissues. IL-23 binds to a heterodimeric receptor complex composed of IL12RB1 and IL23R, activates the Jak-Stat signaling cascade, stimulates memory rather than naive T-cells and promotes production of pro-inflammatory cytokines. IL-23 induces autoimmune inflammation and thus may be responsible for autoimmune inflammatory diseases and may be important for tumorigenesis. The polypeptide is Interleukin-12 subunit beta (IL12B) (Capra hircus (Goat)).